Consider the following 261-residue polypeptide: Cytochrome c oxidase subunit 3 (261 aa).

Residues 1 to 15 (MAHQAHSYHMVDPSP) lie on the Mitochondrial matrix side of the membrane. Residues 16-34 (WPIFGAAAALLTTSGLIMW) traverse the membrane as a helical segment. Topologically, residues 35-40 (FHYSST) are mitochondrial intermembrane. Residues 41 to 66 (TLLTMGLLSMLLVMLQWWRDVVREST) form a helical membrane-spanning segment. Residues 67 to 72 (FQGHHT) are Mitochondrial matrix-facing. The helical transmembrane segment at 73-105 (PTVQKGLRYGMILFITSEAFFFLGFFWAFFHSS) threads the bilayer. At 106–128 (LAPTPELGGQWPPTGVKPLNPLE) the chain is on the mitochondrial intermembrane side. The helical transmembrane segment at 129 to 152 (VPLLNTAILLASGVTVTWAHHSIT) threads the bilayer. Over 153–155 (EGN) the chain is Mitochondrial matrix. Residues 156–183 (RKQAIHALTLTILLGFYFTALQAMEYHE) traverse the membrane as a helical segment. Residues 184-190 (ASFSIAD) are Mitochondrial intermembrane-facing. Residues 191 to 223 (SVYGSTFFVATGFHGLHVIIGSSFLTVCLLRLI) traverse the membrane as a helical segment. Residues 224–232 (KFHFTPNHH) are Mitochondrial matrix-facing. Residues 233 to 256 (FGFEAAAWYWHFVDIIWLFLYMSM) traverse the membrane as a helical segment. At 257-261 (YWWGS) the chain is on the mitochondrial intermembrane side.

Belongs to the cytochrome c oxidase subunit 3 family. As to quaternary structure, component of the cytochrome c oxidase (complex IV, CIV), a multisubunit enzyme composed of 14 subunits. The complex is composed of a catalytic core of 3 subunits MT-CO1, MT-CO2 and MT-CO3, encoded in the mitochondrial DNA, and 11 supernumerary subunits COX4I, COX5A, COX5B, COX6A, COX6B, COX6C, COX7A, COX7B, COX7C, COX8 and NDUFA4, which are encoded in the nuclear genome. The complex exists as a monomer or a dimer and forms supercomplexes (SCs) in the inner mitochondrial membrane with NADH-ubiquinone oxidoreductase (complex I, CI) and ubiquinol-cytochrome c oxidoreductase (cytochrome b-c1 complex, complex III, CIII), resulting in different assemblies (supercomplex SCI(1)III(2)IV(1) and megacomplex MCI(2)III(2)IV(2)).

It localises to the mitochondrion inner membrane. The enzyme catalyses 4 Fe(II)-[cytochrome c] + O2 + 8 H(+)(in) = 4 Fe(III)-[cytochrome c] + 2 H2O + 4 H(+)(out). Functionally, component of the cytochrome c oxidase, the last enzyme in the mitochondrial electron transport chain which drives oxidative phosphorylation. The respiratory chain contains 3 multisubunit complexes succinate dehydrogenase (complex II, CII), ubiquinol-cytochrome c oxidoreductase (cytochrome b-c1 complex, complex III, CIII) and cytochrome c oxidase (complex IV, CIV), that cooperate to transfer electrons derived from NADH and succinate to molecular oxygen, creating an electrochemical gradient over the inner membrane that drives transmembrane transport and the ATP synthase. Cytochrome c oxidase is the component of the respiratory chain that catalyzes the reduction of oxygen to water. Electrons originating from reduced cytochrome c in the intermembrane space (IMS) are transferred via the dinuclear copper A center (CU(A)) of subunit 2 and heme A of subunit 1 to the active site in subunit 1, a binuclear center (BNC) formed by heme A3 and copper B (CU(B)). The BNC reduces molecular oxygen to 2 water molecules using 4 electrons from cytochrome c in the IMS and 4 protons from the mitochondrial matrix. The sequence is that of Cytochrome c oxidase subunit 3 (MT-CO3) from Gallus gallus (Chicken).